The sequence spans 399 residues: MISAIVDERNRMNIRQEISGLGCFKDDRIVFWTWMYSTYFMEKWAPRQDDMLFYVRRKPAYMGPDGNEGRKQVEVEVYRKDSKKLPGLGDPDIDWEESVYLNLILQKLDYMVTCAVCTRSDAGDIHIHKKKSQQVFASPSKHPMDSKGEESKISYPNIFFMIDNFEEVFSDMTVGEGEMVCVELVARDKTNTFQGVIFQGSIRYEALKKVYDNRVSVAAKMAQKMSFGFYKYNNMEFVRMKGPQGKGHAEMAVSRVSTGDTSPYGTEEDSNPGSPMHERVTSFSTPPTPERNNRPSFFSPSLKRKVPRNRNAEMKKSHSANDSEEFFRDSDDDGDLHNVTNLRSRSLSGTGRSLVGSWLKLNRTEENALLYAHLTYVTLPLLRILSDILDVRQKPILMS.

The disordered stretch occupies residues 254–335; sequence SRVSTGDTSP…FFRDSDDDGD (82 aa). Residues 255–264 are compositionally biased toward polar residues; the sequence is RVSTGDTSPY. The span at 310–329 shows a compositional bias: basic and acidic residues; that stretch reads RNAEMKKSHSANDSEEFFRD.

This is an uncharacterized protein from Xenopus laevis (African clawed frog).